Consider the following 161-residue polypeptide: Crossover junction endodeoxyribonuclease RuvC (161 aa).

Catalysis depends on residues Asp7, Glu67, and Asp139. Mg(2+) contacts are provided by Asp7, Glu67, and Asp139.

This sequence belongs to the RuvC family. In terms of assembly, homodimer which binds Holliday junction (HJ) DNA. The HJ becomes 2-fold symmetrical on binding to RuvC with unstacked arms; it has a different conformation from HJ DNA in complex with RuvA. In the full resolvosome a probable DNA-RuvA(4)-RuvB(12)-RuvC(2) complex forms which resolves the HJ. It depends on Mg(2+) as a cofactor.

The protein resides in the cytoplasm. The enzyme catalyses Endonucleolytic cleavage at a junction such as a reciprocal single-stranded crossover between two homologous DNA duplexes (Holliday junction).. In terms of biological role, the RuvA-RuvB-RuvC complex processes Holliday junction (HJ) DNA during genetic recombination and DNA repair. Endonuclease that resolves HJ intermediates. Cleaves cruciform DNA by making single-stranded nicks across the HJ at symmetrical positions within the homologous arms, yielding a 5'-phosphate and a 3'-hydroxyl group; requires a central core of homology in the junction. The consensus cleavage sequence is 5'-(A/T)TT(C/G)-3'. Cleavage occurs on the 3'-side of the TT dinucleotide at the point of strand exchange. HJ branch migration catalyzed by RuvA-RuvB allows RuvC to scan DNA until it finds its consensus sequence, where it cleaves and resolves the cruciform DNA. This is Crossover junction endodeoxyribonuclease RuvC from Syntrophotalea carbinolica (strain DSM 2380 / NBRC 103641 / GraBd1) (Pelobacter carbinolicus).